Here is a 652-residue protein sequence, read N- to C-terminus: Iron-regulated outer membrane virulence protein (652 aa).

Positions 1–25 (MSRFNPSPVSLSVTLGLMFSASAFA) are cleaved as a signal peptide. The TonB box signature appears at 33–40 (ETMVVTAA). A TBDR plug domain is found at 45 to 162 (VIQNAPASIS…IGGVINIITR (118 aa)). In terms of domain architecture, TBDR beta-barrel spans 167-652 (QWSGNVQLST…RYWLGLDIAF (486 aa)). Positions 635–652 (YGYVEDGRRYWLGLDIAF) match the TonB C-terminal box motif.

It belongs to the TonB-dependent receptor family.

It localises to the cell outer membrane. In terms of biological role, involved in the initial step of iron uptake by binding ferric vibriobactin, an iron chelatin siderophore that allows V.cholerae to extract iron from the environment. This is Iron-regulated outer membrane virulence protein (irgA) from Vibrio cholerae serotype O1 (strain ATCC 39315 / El Tor Inaba N16961).